The sequence spans 238 residues: 7-cyano-7-deazaguanine synthase (238 aa).

ATP is bound at residue 14–24 (FSGGQDSTTCL). Residues Cys-195, Cys-204, Cys-207, and Cys-210 each contribute to the Zn(2+) site.

Belongs to the QueC family. Zn(2+) serves as cofactor.

It catalyses the reaction 7-carboxy-7-deazaguanine + NH4(+) + ATP = 7-cyano-7-deazaguanine + ADP + phosphate + H2O + H(+). It functions in the pathway purine metabolism; 7-cyano-7-deazaguanine biosynthesis. Catalyzes the ATP-dependent conversion of 7-carboxy-7-deazaguanine (CDG) to 7-cyano-7-deazaguanine (preQ(0)). The polypeptide is 7-cyano-7-deazaguanine synthase (Baumannia cicadellinicola subsp. Homalodisca coagulata).